A 404-amino-acid polypeptide reads, in one-letter code: Argininosuccinate synthase (404 aa).

Residues 10–18 (AFSGGLDTS) and Ala-37 contribute to the ATP site. L-citrulline is bound by residues Tyr-88 and Ser-93. Gly-118 lines the ATP pocket. The L-aspartate site is built by Thr-120, Asn-124, and Asp-125. Asn-124 contributes to the L-citrulline binding site. L-citrulline-binding residues include Arg-128, Ser-179, Ser-188, Glu-264, and Tyr-276.

This sequence belongs to the argininosuccinate synthase family. Type 1 subfamily. As to quaternary structure, homotetramer.

The protein resides in the cytoplasm. The catalysed reaction is L-citrulline + L-aspartate + ATP = 2-(N(omega)-L-arginino)succinate + AMP + diphosphate + H(+). It participates in amino-acid biosynthesis; L-arginine biosynthesis; L-arginine from L-ornithine and carbamoyl phosphate: step 2/3. This chain is Argininosuccinate synthase, found in Nitrosomonas europaea (strain ATCC 19718 / CIP 103999 / KCTC 2705 / NBRC 14298).